Here is an 81-residue protein sequence, read N- to C-terminus: Elicitor peptide 4 (81 aa).

The propeptide occupies 1–54 (MERGVSYYLWIPFKFIHQTFGSLLLKLLGLRSPSDHSFPEDGEEEVKVVEVSSR). The interval 57–81 (PGKKNVLKKSRESSGKPGGTNKKPF) is disordered.

It belongs to the brassicaceae elicitor peptide family.

Functionally, elicitor of plant defense. In Arabidopsis thaliana (Mouse-ear cress), this protein is Elicitor peptide 4 (PEP4).